The following is a 102-amino-acid chain: Citrate lyase acyl carrier protein (102 aa).

At S14 the chain carries O-(phosphoribosyl dephospho-coenzyme A)serine.

Belongs to the CitD family. Oligomer with a subunit composition of (alpha,beta,gamma)6.

Its subcellular location is the cytoplasm. In terms of biological role, covalent carrier of the coenzyme of citrate lyase. In Streptococcus mutans serotype c (strain ATCC 700610 / UA159), this protein is Citrate lyase acyl carrier protein.